Here is a 105-residue protein sequence, read N- to C-terminus: NADH-quinone oxidoreductase subunit K (105 aa).

A run of 3 helical transmembrane segments spans residues 4–24 (LTHYLILSGVLFAIGLMGVIV), 28–48 (IIVIFMCLEMMLSAANLSLVA), and 66–86 (LSIFILTIAAAEVAIGLALIV).

It belongs to the complex I subunit 4L family. NDH-1 is composed of 14 different subunits. Subunits NuoA, H, J, K, L, M, N constitute the membrane sector of the complex.

The protein resides in the cell inner membrane. The catalysed reaction is a quinone + NADH + 5 H(+)(in) = a quinol + NAD(+) + 4 H(+)(out). Functionally, NDH-1 shuttles electrons from NADH, via FMN and iron-sulfur (Fe-S) centers, to quinones in the respiratory chain. The immediate electron acceptor for the enzyme in this species is believed to be ubiquinone. Couples the redox reaction to proton translocation (for every two electrons transferred, four hydrogen ions are translocated across the cytoplasmic membrane), and thus conserves the redox energy in a proton gradient. The polypeptide is NADH-quinone oxidoreductase subunit K (Akkermansia muciniphila (strain ATCC BAA-835 / DSM 22959 / JCM 33894 / BCRC 81048 / CCUG 64013 / CIP 107961 / Muc)).